The primary structure comprises 229 residues: Non-structural protein P8 (229 aa).

The next 2 membrane-spanning stretches (helical) occupy residues isoleucine 119–leucine 139 and serine 162–alanine 182.

This sequence belongs to the orbivirus NS3 family. Forms homooligomers via coiled-coil motif. Interacts with host OPTN; this interaction inhibits innate immune response.

The protein localises to the host cell membrane. It is found in the host Golgi apparatus. Plays a role in the inhibition of host innate immune response. Interacts with host OPTN and thus inhibits the recruitment of TBK1 to the host Golgi apparatus. In turn, downstream partner IRF3 cannot be activated and IFN-beta production is impaired. Its function is as follows. Facilitates viral particle release either by increasing plasma membrane permeability through a viroporin-like activity or by viral budding. This Antilocapra americana (Pronghorn) protein is Non-structural protein P8 (Segment-10).